The chain runs to 408 residues: Na(+)-translocating NADH-quinone reductase subunit F (408 aa).

A helical transmembrane segment spans residues 4-24 (IYLGVGMFTIIVLVLVAIIMF). A 2Fe-2S ferredoxin-type domain is found at 33 to 127 (GDVEILINDD…DMEIELPEEV (95 aa)). [2Fe-2S] cluster is bound by residues Cys70, Cys76, Cys79, and Cys111. The FAD-binding FR-type domain maps to 130–270 (IRKWDCTVKS…SGPFGEFFAK (141 aa)).

It belongs to the NqrF family. Composed of six subunits; NqrA, NqrB, NqrC, NqrD, NqrE and NqrF. The cofactor is [2Fe-2S] cluster. FAD is required as a cofactor.

Its subcellular location is the cell inner membrane. It carries out the reaction a ubiquinone + n Na(+)(in) + NADH + H(+) = a ubiquinol + n Na(+)(out) + NAD(+). In terms of biological role, NQR complex catalyzes the reduction of ubiquinone-1 to ubiquinol by two successive reactions, coupled with the transport of Na(+) ions from the cytoplasm to the periplasm. The first step is catalyzed by NqrF, which accepts electrons from NADH and reduces ubiquinone-1 to ubisemiquinone by a one-electron transfer pathway. The protein is Na(+)-translocating NADH-quinone reductase subunit F of Idiomarina loihiensis (strain ATCC BAA-735 / DSM 15497 / L2-TR).